The chain runs to 256 residues: Fat body protein 2 (256 aa).

Residue 10–34 (VYVGSFSGIGWQMMMQLMQKDIKMM) coordinates NAD(+). Position 138 (Ser-138) interacts with substrate. Tyr-151 acts as the Proton acceptor in catalysis.

It belongs to the short-chain dehydrogenases/reductases (SDR) family.

This is Fat body protein 2 (Fbp2) from Drosophila melanogaster (Fruit fly).